Here is a 261-residue protein sequence, read N- to C-terminus: Cytochrome c oxidase subunit 3 (261 aa).

Over 1–15 (MAHQAHAYHMVDPSP) the chain is Mitochondrial matrix. Residues 16-34 (WPLTGAIAALLMTSGLAIW) form a helical membrane-spanning segment. Residues 35–40 (FHFHST) lie on the Mitochondrial intermembrane side of the membrane. The helical transmembrane segment at 41-66 (TLMTLGLILLLLTMYQWWRDIIREGT) threads the bilayer. Residues 67–72 (FQGHHT) are Mitochondrial matrix-facing. Residues 73–105 (PPVQKGLRYGMILFITSEVFFFLGFFWAFYHSS) form a helical membrane-spanning segment. Residues 106–128 (LAPTPELGGCWPPTGITPLDPFE) lie on the Mitochondrial intermembrane side of the membrane. A helical membrane pass occupies residues 129 to 152 (VPLLNTAVLLASGVTVTWAHHSIM). The Mitochondrial matrix segment spans residues 153-155 (EGE). Residues 156–183 (RKQAIQSLALTILLGLYFTALQAMEYYE) form a helical membrane-spanning segment. Residues 184–190 (APFTIAD) are Mitochondrial intermembrane-facing. The helical transmembrane segment at 191–223 (GVYGSTFFVATGFHGLHVIIGSTFLAVCLLRQI) threads the bilayer. Residues 224–232 (QYHFTSEHH) lie on the Mitochondrial matrix side of the membrane. The chain crosses the membrane as a helical span at residues 233–256 (FGFEAAAWYWHFVDVVWLFLYVSI). The Mitochondrial intermembrane segment spans residues 257-261 (YWWGS).

Belongs to the cytochrome c oxidase subunit 3 family. Component of the cytochrome c oxidase (complex IV, CIV), a multisubunit enzyme composed of 14 subunits. The complex is composed of a catalytic core of 3 subunits MT-CO1, MT-CO2 and MT-CO3, encoded in the mitochondrial DNA, and 11 supernumerary subunits COX4I, COX5A, COX5B, COX6A, COX6B, COX6C, COX7A, COX7B, COX7C, COX8 and NDUFA4, which are encoded in the nuclear genome. The complex exists as a monomer or a dimer and forms supercomplexes (SCs) in the inner mitochondrial membrane with NADH-ubiquinone oxidoreductase (complex I, CI) and ubiquinol-cytochrome c oxidoreductase (cytochrome b-c1 complex, complex III, CIII), resulting in different assemblies (supercomplex SCI(1)III(2)IV(1) and megacomplex MCI(2)III(2)IV(2)).

It localises to the mitochondrion inner membrane. It catalyses the reaction 4 Fe(II)-[cytochrome c] + O2 + 8 H(+)(in) = 4 Fe(III)-[cytochrome c] + 2 H2O + 4 H(+)(out). Component of the cytochrome c oxidase, the last enzyme in the mitochondrial electron transport chain which drives oxidative phosphorylation. The respiratory chain contains 3 multisubunit complexes succinate dehydrogenase (complex II, CII), ubiquinol-cytochrome c oxidoreductase (cytochrome b-c1 complex, complex III, CIII) and cytochrome c oxidase (complex IV, CIV), that cooperate to transfer electrons derived from NADH and succinate to molecular oxygen, creating an electrochemical gradient over the inner membrane that drives transmembrane transport and the ATP synthase. Cytochrome c oxidase is the component of the respiratory chain that catalyzes the reduction of oxygen to water. Electrons originating from reduced cytochrome c in the intermembrane space (IMS) are transferred via the dinuclear copper A center (CU(A)) of subunit 2 and heme A of subunit 1 to the active site in subunit 1, a binuclear center (BNC) formed by heme A3 and copper B (CU(B)). The BNC reduces molecular oxygen to 2 water molecules using 4 electrons from cytochrome c in the IMS and 4 protons from the mitochondrial matrix. This chain is Cytochrome c oxidase subunit 3 (mt-co3), found in Cyprinus carpio (Common carp).